Here is a 573-residue protein sequence, read N- to C-terminus: 60 kDa heat shock protein, mitochondrial (573 aa).

The transit peptide at Met1–Tyr26 directs the protein to the mitochondrion. The residue at position 31 (Lys31) is an N6-succinyllysine. Phosphoserine is present on residues Ser67 and Ser70. Lys75 contacts ATP. Lys75 is subject to N6-acetyllysine. Lys82 is subject to N6-acetyllysine; alternate. An N6-succinyllysine; alternate modification is found at Lys82. N6-acetyllysine is present on Lys87. Position 90 is a phosphotyrosine (Tyr90). At Lys91 the chain carries N6-acetyllysine. Asp111–Thr115 contacts ATP. Residue Lys125 is modified to N6-acetyllysine; alternate. At Lys125 the chain carries N6-succinyllysine; alternate. At Lys130 the chain carries N6-acetyllysine. Lys133 is modified (N6-acetyllysine; alternate). Position 133 is an N6-succinyllysine; alternate (Lys133). Lys133 carries the N6-malonyllysine; alternate modification. Lys156 is modified (N6-acetyllysine). N6-acetyllysine; alternate occurs at positions 191, 202, 205, 218, and 236. An N6-succinyllysine; alternate mark is found at Lys191, Lys202, Lys205, Lys218, and Lys236. Lys249 carries the N6-acetyllysine modification. Residue Lys250 is modified to N6-acetyllysine; alternate. Lys250 is subject to N6-succinyllysine; alternate. Lys269 and Lys292 each carry N6-acetyllysine. An N6-succinyllysine modification is found at Lys301. Lys314 bears the N6-acetyllysine mark. The residue at position 352 (Lys352) is an N6-acetyllysine; alternate. At Lys352 the chain carries N6-succinyllysine; alternate. An N6-acetyllysine mark is found at Lys359 and Lys389. N6-acetyllysine; alternate is present on Lys396. Lys396 is modified (N6-succinyllysine; alternate). A Phosphoserine modification is found at Ser410. Gly440 is a binding site for ATP. Lys455 bears the N6-acetyllysine; alternate mark. Residue Lys455 is modified to N6-succinyllysine; alternate. The residue at position 469 (Lys469) is an N6-acetyllysine. Lys481 is subject to N6-acetyllysine; alternate. Lys481 carries the N6-succinyllysine; alternate modification. Ser488 is subject to Phosphoserine. Asp520 contributes to the ATP binding site. Residue Lys551 forms a Glycyl lysine isopeptide (Lys-Gly) (interchain with G-Cter in SUMO2) linkage.

It belongs to the chaperonin (HSP60) family. Homoheptamer arranged in a ring structure. The functional units of these chaperonins consist of heptameric rings of the large subunit Hsp60, which function as a back-to-back double ring. Interacts with 2 heptameric Hsp10 rings to form the symmetrical football complex. Interacts with HRAS. Interacts with ATAD3A. Interacts with ETFBKMT and EEF1AKMT3. Interacts with MFHAS1.

The protein resides in the mitochondrion matrix. The enzyme catalyses ATP + H2O + a folded polypeptide = ADP + phosphate + an unfolded polypeptide.. Chaperonin implicated in mitochondrial protein import and macromolecular assembly. Together with Hsp10, facilitates the correct folding of imported proteins. May also prevent misfolding and promote the refolding and proper assembly of unfolded polypeptides generated under stress conditions in the mitochondrial matrix. The functional units of these chaperonins consist of heptameric rings of the large subunit Hsp60, which function as a back-to-back double ring. In a cyclic reaction, Hsp60 ring complexes bind one unfolded substrate protein per ring, followed by the binding of ATP and association with 2 heptameric rings of the co-chaperonin Hsp10. This leads to sequestration of the substrate protein in the inner cavity of Hsp60 where, for a certain period of time, it can fold undisturbed by other cell components. Synchronous hydrolysis of ATP in all Hsp60 subunits results in the dissociation of the chaperonin rings and the release of ADP and the folded substrate protein. In Rattus norvegicus (Rat), this protein is 60 kDa heat shock protein, mitochondrial (Hspd1).